A 362-amino-acid chain; its full sequence is Photosystem II protein D1 3 (362 aa).

The next 3 membrane-spanning stretches (helical) occupy residues 29–46 (YVGWFGVLMIPTLLSATI), 118–133 (HFLIGVFCYLGREWEL), and 142–156 (WICIAYSAPVAAATA). Histidine 118 lines the chlorophyll a pocket. Tyrosine 126 serves as a coordination point for pheophytin a. [CaMn4O5] cluster-binding residues include aspartate 170 and glutamate 189. Residues 197 to 218 (FHMLGVAGVFGGALISAMHGSL) form a helical membrane-spanning segment. Histidine 198 provides a ligand contact to chlorophyll a. A quinone-binding positions include histidine 215 and 264-265 (AF). A Fe cation-binding site is contributed by histidine 215. Histidine 274 lines the Fe cation pocket. The helical transmembrane segment at 276 to 290 (IMAAFPVIGIWFTSL) threads the bilayer. Residues histidine 334, glutamate 335, aspartate 344, and alanine 346 each coordinate [CaMn4O5] cluster. A propeptide spanning residues 347–362 (GTESAPVAVSTAKVGG) is cleaved from the precursor.

The protein belongs to the reaction center PufL/M/PsbA/D family. As to quaternary structure, PSII is composed of 1 copy each of membrane proteins PsbA, PsbB, PsbC, PsbD, PsbE, PsbF, PsbH, PsbI, PsbJ, PsbK, PsbL, PsbM, PsbT, PsbX, Psb30/Ycf12, peripheral proteins PsbO, CyanoQ (PsbQ), PsbU, PsbV and a large number of cofactors. It forms dimeric complexes. The cofactor is The D1/D2 heterodimer binds P680, chlorophylls that are the primary electron donor of PSII, and subsequent electron acceptors. It shares a non-heme iron and each subunit binds pheophytin, quinone, additional chlorophylls, carotenoids and lipids. D1 provides most of the ligands for the Mn4-Ca-O5 cluster of the oxygen-evolving complex (OEC). There is also a Cl(-1) ion associated with D1 and D2, which is required for oxygen evolution. The PSII complex binds additional chlorophylls, carotenoids and specific lipids.. Tyr-161 forms a radical intermediate that is referred to as redox-active TyrZ, YZ or Y-Z. In terms of processing, C-terminally processed by CtpA; processing is essential to allow assembly of the oxygen-evolving complex and thus photosynthetic growth.

It is found in the cell inner membrane. The catalysed reaction is 2 a plastoquinone + 4 hnu + 2 H2O = 2 a plastoquinol + O2. Functionally, photosystem II (PSII) is a light-driven water:plastoquinone oxidoreductase that uses light energy to abstract electrons from H(2)O, generating O(2) and a proton gradient subsequently used for ATP formation. It consists of a core antenna complex that captures photons, and an electron transfer chain that converts photonic excitation into a charge separation. The D1/D2 (PsbA/PsbD) reaction center heterodimer binds P680, the primary electron donor of PSII as well as several subsequent electron acceptors. The chain is Photosystem II protein D1 3 from Gloeobacter violaceus (strain ATCC 29082 / PCC 7421).